We begin with the raw amino-acid sequence, 737 residues long: Lysyl oxidase homolog 2A (737 aa).

A signal peptide spans 1 to 18 (MAVSSALCIFSLLVLAQA). SRCR domains follow at residues 29–130 (LRLA…VICN), 159–270 (IRPI…VSCV), 294–393 (VRLR…VRCN), and 403–512 (IRLS…VSCS). 9 cysteine pairs are disulfide-bonded: Cys-55–Cys-119, Cys-68–Cys-129, Cys-99–Cys-109, Cys-188–Cys-259, Cys-201–Cys-269, Cys-235–Cys-245, Cys-319–Cys-382, Cys-332–Cys-392, and Cys-363–Cys-373. Asn-256 carries N-linked (GlcNAc...) asparagine glycosylation. Residue Asn-423 is glycosylated (N-linked (GlcNAc...) asparagine). 3 disulfide bridges follow: Cys-432–Cys-498, Cys-445–Cys-511, and Cys-479–Cys-489. Residues 516 to 718 (PDLVLNAQLV…WTYSCHIGGS (203 aa)) form a lysyl-oxidase like region. The Ca(2+) site is built by Asp-517 and Leu-518. 4 cysteine pairs are disulfide-bonded: Cys-541–Cys-592, Cys-547–Cys-662, Cys-624–Cys-640, and Cys-630–Cys-652. Residues His-593, His-595, and His-597 each contribute to the Cu cation site. The N-linked (GlcNAc...) asparagine glycan is linked to Asn-611. The segment at residues 620 to 656 (KASFCLEDTHCDEGISKRYHCANFGEQGITVGCWDTY) is a cross-link (lysine tyrosylquinone (Lys-Tyr)). The residue at position 656 (Tyr-656) is a 2',4',5'-topaquinone. Glu-689, Asp-691, Asn-694, and Asn-695 together coordinate Ca(2+). A disulfide bridge links Cys-699 with Cys-713.

It belongs to the lysyl oxidase family. It depends on Cu cation as a cofactor. Lysine tyrosylquinone residue is required as a cofactor. The lysine tyrosylquinone cross-link (LTQ) is generated by condensation of the epsilon-amino group of a lysine with a topaquinone produced by oxidation of tyrosine.

It localises to the secreted. The protein localises to the extracellular space. Its subcellular location is the extracellular matrix. The protein resides in the basement membrane. It is found in the nucleus. It localises to the chromosome. The protein localises to the endoplasmic reticulum. The enzyme catalyses L-lysyl-[protein] + O2 + H2O = (S)-2-amino-6-oxohexanoyl-[protein] + H2O2 + NH4(+). In terms of biological role, mediates the post-translational oxidative deamination of lysine residues on target proteins leading to the formation of deaminated lysine (allysine). Acts as a transcription corepressor and specifically mediates deamination of trimethylated 'Lys-4' of histone H3 (H3K4me3), a specific tag for epigenetic transcriptional activation. Shows no activity against histone H3 when it is trimethylated on 'Lys-9' (H3K9me3) or 'Lys-27' (H3K27me3) or when 'Lys-4' is monomethylated (H3K4me1) or dimethylated (H3K4me2). Also mediates deamination of methylated TAF10, a member of the transcription factor IID (TFIID) complex, which induces release of TAF10 from promoters, leading to inhibition of TFIID-dependent transcription. LOXL2-mediated deamination of TAF10 results in transcriptional repression of genes required for embryonic stem cell pluripotency. Involved in epithelial to mesenchymal transition (EMT) and participates in repression of E-cadherin, probably by mediating deamination of histone H3. When secreted into the extracellular matrix, promotes cross-linking of extracellular matrix proteins by mediating oxidative deamination of peptidyl lysine residues in precursors to fibrous collagen and elastin. Acts as a regulator of sprouting angiogenesis, probably via collagen IV scaffolding. Acts as a regulator of chondrocyte differentiation, probably by regulating expression of factors that control chondrocyte differentiation. Required with loxl2b for correct expression of Sox2 and for neural differentiation. In Danio rerio (Zebrafish), this protein is Lysyl oxidase homolog 2A (loxl2a).